An 84-amino-acid chain; its full sequence is MVTEKTLERINELYHKSKAEGLTDAELAEQKQLRADYVKAFRENLRGQLESIKIKNPDGSLIDVKARHDEKMKRLAEEQAEKGN.

Belongs to the UPF0291 family.

It localises to the cytoplasm. This is UPF0291 protein EUBELI_00985 from Lachnospira eligens (strain ATCC 27750 / DSM 3376 / VPI C15-48 / C15-B4) (Eubacterium eligens).